The primary structure comprises 186 residues: Mediator of RNA polymerase II transcription subunit 10a (186 aa).

Belongs to the Mediator complex subunit 10 family. Mono-, di- and oligomers. Component of the Mediator complex. Interacts with GEBPL.

The protein localises to the nucleus. In terms of biological role, component of the Mediator complex, a coactivator involved in the regulated transcription of nearly all RNA polymerase II-dependent genes. Mediator functions as a bridge to convey information from gene-specific regulatory proteins to the basal RNA polymerase II transcription machinery. The Mediator complex, having a compact conformation in its free form, is recruited to promoters by direct interactions with regulatory proteins and serves for the assembly of a functional pre-initiation complex with RNA polymerase II and the general transcription factors. The sequence is that of Mediator of RNA polymerase II transcription subunit 10a from Arabidopsis thaliana (Mouse-ear cress).